Reading from the N-terminus, the 434-residue chain is Gamma-enolase (434 aa).

Residue serine 2 is modified to N-acetylserine. Lysine 5 carries the N6-acetyllysine modification. Phosphothreonine is present on threonine 26. Mg(2+) is bound at residue serine 40. A Phosphotyrosine modification is found at tyrosine 44. At lysine 60 the chain carries N6-acetyllysine; alternate. At lysine 60 the chain carries N6-succinyllysine; alternate. Position 64 is an N6-acetyllysine (lysine 64). Residue lysine 89 is modified to N6-acetyllysine; alternate. The residue at position 89 (lysine 89) is an N6-succinyllysine; alternate. Substrate-binding residues include histidine 158 and glutamate 167. An N6-acetyllysine mark is found at lysine 193, lysine 197, and lysine 199. Residue lysine 202 is modified to N6-acetyllysine; alternate. Lysine 202 participates in a covalent cross-link: Glycyl lysine isopeptide (Lys-Gly) (interchain with G-Cter in SUMO2); alternate. Glutamate 210 (proton donor) is an active-site residue. 2 positions are modified to N6-acetyllysine; alternate: lysine 228 and lysine 233. At lysine 228 the chain carries N6-succinyllysine; alternate. Lysine 233 bears the N6-(2-hydroxyisobutyryl)lysine; alternate mark. A Mg(2+)-binding site is contributed by aspartate 245. Lysine 256 carries the N6-acetyllysine modification. Serine 263 is subject to Phosphoserine. Residue tyrosine 287 is modified to Phosphotyrosine. Serine 291 bears the Phosphoserine mark. Residues glutamate 293 and aspartate 318 each contribute to the Mg(2+) site. Substrate contacts are provided by glutamate 293 and aspartate 318. Lysine 335 and lysine 343 each carry N6-acetyllysine. Lysine 343 acts as the Proton acceptor in catalysis. Substrate contacts are provided by residues serine 370–serine 373 and lysine 394. Lysine 406 carries the N6-acetyllysine modification.

The protein belongs to the enolase family. In terms of assembly, mammalian enolase is composed of 3 isozyme subunits, alpha, beta and gamma, which can form homodimers or heterodimers which are cell-type and development-specific. The cofactor is Mg(2+). In terms of tissue distribution, skeletal muscle (at protein level). The alpha/alpha homodimer is expressed in embryo and in most adult tissues. The alpha/beta heterodimer and the beta/beta homodimer are found in striated muscle, and the alpha/gamma heterodimer and the gamma/gamma homodimer in neurons.

Its subcellular location is the cytoplasm. The protein localises to the cell membrane. It carries out the reaction (2R)-2-phosphoglycerate = phosphoenolpyruvate + H2O. The protein operates within carbohydrate degradation; glycolysis; pyruvate from D-glyceraldehyde 3-phosphate: step 4/5. Its function is as follows. Has neurotrophic and neuroprotective properties on a broad spectrum of central nervous system (CNS) neurons. Binds, in a calcium-dependent manner, to cultured neocortical neurons and promotes cell survival. This chain is Gamma-enolase (Eno2), found in Mus musculus (Mouse).